A 175-amino-acid polypeptide reads, in one-letter code: Mitochondrial inner membrane protease subunit 2 (175 aa).

The chain crosses the membrane as a helical span at residues 19–37; the sequence is FFVAVPVAVTFLDRVACVA. Residues serine 43 and lysine 91 contribute to the active site.

The protein belongs to the peptidase S26 family. IMP2 subfamily. As to quaternary structure, heterodimer of 2 subunits, IMMPL1 and IMMPL2.

The protein localises to the mitochondrion inner membrane. In terms of biological role, catalyzes the removal of transit peptides required for the targeting of proteins from the mitochondrial matrix, across the inner membrane, into the inter-membrane space. Known to process the nuclear encoded protein DIABLO. The chain is Mitochondrial inner membrane protease subunit 2 (Immp2l) from Mus musculus (Mouse).